A 181-amino-acid polypeptide reads, in one-letter code: Malignant T-cell-amplified sequence 1-A (181 aa).

Residues 92–171 form the PUA domain; the sequence is LPHQQVDKGA…IGIENIHYLN (80 aa).

The protein belongs to the MCTS1 family.

It localises to the cytoplasm. Its function is as follows. Plays a role as translation enhancer and involved in cell cycle regulation. The sequence is that of Malignant T-cell-amplified sequence 1-A (mcts1-a) from Xenopus laevis (African clawed frog).